A 496-amino-acid polypeptide reads, in one-letter code: MKKYVLAFDQGTTSCRAILFDKDGKKIETAQQEFSQIFPKQGWVEHDAMEIWGKQSGVAREVLERSGVSTQEIAAIGITNQRETTVVWNKNTGRPVCNAIVWQCRRTADICDALKEKGLSDSIRKKTGLIIDAYFSGTKIKWILDNVPEARTLAEKGELLFGNIDTWLIWNLTRGKVHVTDYTNASRTLLFNIHTLQWDKELLKAMDIPESMLPEVKPSSYVYGYTEEHTFGGSKIPIAGAAGDQQAALFGQACFEEGSAKNTYGTGCFMLMNTGDKIIESENGLLTTIAFGIDNSVKYALEGSSFIAGAAVQWLRDELKLIYTAHETEYYAGLVNDTNGVYFVPAFSGLGAPYWDMYARGALLGLTRGAKREHIVRAVLEAIAYQTKDVLYAMEKDSKINLKSLKVDGGACANNFLMQFQSDILNVPVLRPYEKETTALGAAYLAGLAVGFWKEQGEIKRIQDIEREFRPDMEEEKRKTLYAGWKKAVERSMKWA.

Residue Thr-12 coordinates ADP. Thr-12, Thr-13, and Ser-14 together coordinate ATP. Residue Thr-12 participates in sn-glycerol 3-phosphate binding. Arg-16 provides a ligand contact to ADP. Residues Arg-82, Glu-83, Tyr-134, and Asp-244 each coordinate sn-glycerol 3-phosphate. Glycerol-binding residues include Arg-82, Glu-83, Tyr-134, Asp-244, and Gln-245. ADP contacts are provided by Thr-266 and Gly-309. ATP-binding residues include Thr-266, Gly-309, Gln-313, and Gly-410. The ADP site is built by Gly-410 and Asn-414.

The protein belongs to the FGGY kinase family.

The catalysed reaction is glycerol + ATP = sn-glycerol 3-phosphate + ADP + H(+). Its pathway is polyol metabolism; glycerol degradation via glycerol kinase pathway; sn-glycerol 3-phosphate from glycerol: step 1/1. Inhibited by fructose 1,6-bisphosphate (FBP). Key enzyme in the regulation of glycerol uptake and metabolism. Catalyzes the phosphorylation of glycerol to yield sn-glycerol 3-phosphate. The protein is Glycerol kinase of Treponema denticola (strain ATCC 35405 / DSM 14222 / CIP 103919 / JCM 8153 / KCTC 15104).